The following is a 158-amino-acid chain: MKNSRPVLFAVALASLLLLAVALYLQHVENMLPCPLCVIQRYAFAAIALICLVTAFRTEVTARIGAALAALASLAGAGVAGWHIYIKAHPTVSCGIDPLETSLNTIPTAKLLPFLLQADGLCTTEYAPIMGLSIPQWALVWFIVIALFLLHTAFRKKS.

Residues 1–7 (MKNSRPV) lie on the Cytoplasmic side of the membrane. A helical membrane pass occupies residues 8–24 (LFAVALASLLLLAVALY). Residues 25–42 (LQHVENMLPCPLCVIQRY) lie on the Periplasmic side of the membrane. A disulfide bridge links Cys34 with Cys37. A helical membrane pass occupies residues 43 to 57 (AFAAIALICLVTAFR). Topologically, residues 58 to 63 (TEVTAR) are cytoplasmic. A helical membrane pass occupies residues 64–81 (IGAALAALASLAGAGVAG). At 82-136 (WHIYIKAHPTVSCGIDPLETSLNTIPTAKLLPFLLQADGLCTTEYAPIMGLSIPQ) the chain is on the periplasmic side. A disulfide bond links Cys94 and Cys122. A helical transmembrane segment spans residues 137 to 155 (WALVWFIVIALFLLHTAFR). At 156–158 (KKS) the chain is on the cytoplasmic side.

Belongs to the DsbB family.

The protein localises to the cell inner membrane. In terms of biological role, required for disulfide bond formation in some periplasmic proteins. Acts by oxidizing the DsbA protein. The sequence is that of Disulfide bond formation protein B from Herminiimonas arsenicoxydans.